Reading from the N-terminus, the 293-residue chain is MDSIYCTFDQKLTLSDIGTLCKLTNAVIPIPSHRHLIGNTNLGLYTVLSTTTDYIQIRDILKTMVLTILQKVEGNQLILIRPKIGHQYEIKNTGPFPLEKGDQLSLLPPFLKPSQQLLVLPNWELILPLLIPTDVATEINVRMLCISLLSIHRKYEEVQIIIDELRTLQYRDVTIKLPDVINDCKSTFSMKTACISFSMIATMAPDIVQTYIERLSLEDQSMLLIKCQELLAKKNFSQEPSSFKATEIKTELQKIKTVFTMINQINSLTQEKTFFIVADVSADNRLATCIFKE.

It belongs to the herpesviridae TRX2 protein family. As to quaternary structure, interacts with TRX1 and major capisd protein/MCP.

It is found in the virion. The protein resides in the host nucleus. Structural component of the T=16 icosahedral capsid. The capsid is composed of pentamers and hexamers of major capsid protein/MCP, which are linked together by heterotrimers called triplexes. These triplexes are formed by a single molecule of triplex protein 1/TRX1 and two copies of triplex protein 2/TRX2. Additionally, TRX1 is required for efficient transport of TRX2 to the nucleus, which is the site of capsid assembly. This is Triplex capsid protein 2 from Homo sapiens (Human).